Consider the following 61-residue polypeptide: DNA-binding protein 7a (61 aa).

The segment at 37–61 (NGKTGRGAVSEKDAPKELLEKLEKK) is disordered. Residues 45-61 (VSEKDAPKELLEKLEKK) show a composition bias toward basic and acidic residues.

The protein belongs to the 7 kDa DNA-binding/endoribonuclease P2 family. In terms of assembly, monomer.

The protein localises to the cytoplasm. Functionally, can constrain negative DNA supercoils. May be involved in maintaining the integrity of the genome at high temperature. This chain is DNA-binding protein 7a, found in Acidianus hospitalis (strain W1).